We begin with the raw amino-acid sequence, 118 residues long: Small ribosomal subunit protein bTHXc (118 aa).

A chloroplast-targeting transit peptide spans 1 to 55 (MASLILGAPPRVTVALPSSRLSSSHSETAGVSLSCFTHQFSLSTSSSSSIPLVYC). Residues 61 to 118 (KTAKGKRFNHSFGNARPRNKSKGRGPERVPVPPAPPRKDKFENDEKIKIDIDESLFSN) form a disordered region. A compositionally biased stretch (basic and acidic residues) spans 96–111 (PRKDKFENDEKIKIDI). Residue Ser117 is modified to Phosphoserine.

The protein belongs to the bacterial ribosomal protein bTHX family. In terms of assembly, part of the 30S ribosomal subunit.

The protein localises to the plastid. It is found in the chloroplast. The polypeptide is Small ribosomal subunit protein bTHXc (RPS31) (Arabidopsis thaliana (Mouse-ear cress)).